The sequence spans 764 residues: Complement factor B (764 aa).

Positions Met-1–Thr-25 are cleaved as a signal peptide. 3 consecutive Sushi domains span residues Gly-35–Ala-100, Ile-101–Asn-160, and Gly-163–Asp-220. 6 cysteine pairs are disulfide-bonded: Cys-37–Cys-76, Cys-62–Cys-98, Cys-103–Cys-145, Cys-131–Cys-158, Cys-165–Cys-205, and Cys-191–Cys-218. N-linked (GlcNAc...) asparagine glycans are attached at residues Asn-122 and Asn-142. The 200-residue stretch at Asn-270–Ile-469 folds into the VWFA domain. Mg(2+)-binding residues include Ser-278 and Ser-280. Asn-285 is a glycosylation site (N-linked (GlcNAc...) asparagine). Thr-353 lines the Mg(2+) pocket. N-linked (GlcNAc...) asparagine glycosylation is present at Asn-378. The Peptidase S1 domain maps to Leu-477–Gln-757. 5 disulfides stabilise this stretch: Cys-478/Cys-596, Cys-511/Cys-527, Cys-599/Cys-615, Cys-656/Cys-682, and Cys-695/Cys-725. Active-site charge relay system residues include His-526 and Asp-576. Residue Ser-699 is the Charge relay system of the active site.

It belongs to the peptidase S1 family. As to quaternary structure, monomer. Interacts with complement C3b; this interaction is dependent on the presence of Mg(2+). In terms of assembly, catalytic component of the C3 convertase of the alternative complement pathway, also named C3bBb, composed of complement factor B Bb and complement C3b. Catalytic component of the C5 convertase of the alternative complement pathway, also named C3bBb3b, composed of complement factor B Bb and additional molecules of complement C3b. Interacts to CFP; this interaction contributes to the stabilization of the active C3-convertase enzyme complex. It depends on Mg(2+) as a cofactor. Mn(2+) serves as cofactor. In terms of processing, cleaved by CFD following activation of the alternative complement system, generating Ba and Bb chains. Cleavage and activation takes place when CFB is already associated with complement C3b.

The protein localises to the secreted. Its subcellular location is the cell surface. It carries out the reaction Cleavage of Arg-|-Ser bond in complement component C3 alpha-chain to yield C3a and C3b, and Arg-|-Xaa bond in complement component C5 alpha-chain to yield C5a and C5b.. Functionally, precursor of the catalytic component of the C3 and C5 convertase complexes of the alternative pathway of the complement system, a cascade of proteins that leads to phagocytosis and breakdown of pathogens and signaling that strengthens the adaptive immune system. The alternative complement pathway acts as an amplification loop that enhances other complement pathways (classical, lectin and GZMK) by promoting formation of additional C3 and C5 convertases. CFB is cleaved and activated by CFD to generate Ba and Bb chains; Bb chain constituting the catalytic component of the C3 and C5 convertases. Serine protease component of the complement C3 and C5 convertase complexes of the alternative complement pathway. Following cleavage and activation by factor D (CFD), forms the C3 convertase together with complement C3b. As part of the C3 convertase, cleaves and activates C3 into C3a anaphylatoxin and C3b opsonin, the next components of the complement pathways. When an additional complement C3b molecule binds to the C3 convertase, forms the C5 convertase, which cleaves and activates C5 into C5a anaphylatoxin and C5b component of the membrane attack complex. Its function is as follows. Involved in proliferation and differentiation of preactivated B-lymphocytes, rapid spreading of peripheral blood monocytes, stimulation of lymphocyte blastogenesis and lysis of erythrocytes. The protein is Complement factor B (CFB) of Pongo pygmaeus (Bornean orangutan).